The chain runs to 60 residues: Large ribosomal subunit protein bL32 (60 aa).

Belongs to the bacterial ribosomal protein bL32 family.

This Pseudothermotoga lettingae (strain ATCC BAA-301 / DSM 14385 / NBRC 107922 / TMO) (Thermotoga lettingae) protein is Large ribosomal subunit protein bL32.